The following is a 670-amino-acid chain: Solute carrier organic anion transporter family member 1A3 (670 aa).

The Cytoplasmic segment spans residues 1 to 20; that stretch reads MGDLEKGAATHGAGCFAKIK. The helical transmembrane segment at 21–40 threads the bilayer; the sequence is VFLMALTCAYVSKSLSGTFM. The Extracellular segment spans residues 41 to 59; the sequence is SSMLTQIERQFGIPTAIVG. The chain crosses the membrane as a helical span at residues 60 to 80; the sequence is FINGSFEIGNLLLIIFVSYFG. Topologically, residues 81–86 are cytoplasmic; that stretch reads MKLHRP. A helical transmembrane segment spans residues 87-111; that stretch reads IVIGVGCAVMGLGCFIISLPHFLMG. Residues 112–155 are Extracellular-facing; it reads RYEYETTILPTSNLSSNSFLCMENQTQTLNPAQDPAECVKEVKS. N-linked (GlcNAc...) asparagine glycosylation is found at N124 and N135. Residues 156–184 traverse the membrane as a helical segment; the sequence is LMWIYVLVGNIIRGIGETPIMPLGVSYIE. Over 185-203 the chain is Cytoplasmic; sequence NFAKSENSPLYIGILETGK. Residues 204–224 form a helical membrane-spanning segment; sequence MIGPIFGLLLGSFCASIYVDT. Residues 225–242 are Extracellular-facing; sequence GSVNTDDLTITPTDIRWV. A helical membrane pass occupies residues 243–267; it reads GAWWIGFLVCAGVNILISIPFFFFP. The Cytoplasmic portion of the chain corresponds to 268 to 311; it reads KTLPKEGLQENVDGTENAKEESTEKRPRKKNRGITKDFFPFLKS. The tract at residues 277–296 is disordered; that stretch reads ENVDGTENAKEESTEKRPRK. Over residues 283–292 the composition is skewed to basic and acidic residues; sequence ENAKEESTEK. A helical membrane pass occupies residues 312–333; it reads PVLQPDLHAVHPYKVLQVNAFN. Over 334 to 353 the chain is Extracellular; that stretch reads IYFSFLPKYLENQYGKSTAE. Residues 354–377 form a helical membrane-spanning segment; sequence VIFLMGVYNLPAICIGYLIAGFMM. Topologically, residues 378–381 are cytoplasmic; sequence KKFK. A helical transmembrane segment spans residues 382–405; sequence ITVKTAAFLAFCLSLSEYSFGFCN. The Extracellular segment spans residues 406–513; the sequence is FLITCDNVPV…PECTNKLQYL (108 aa). In terms of domain architecture, Kazal-like spans 433-488; the sequence is NNVLADCNTRCSCLTKTWDPVCGDNGLAYMSACLAGCEKSVGTGTNMVFHNCSCIQ. Disulfide bonds link C439/C469, C445/C465, and C454/C486. 2 N-linked (GlcNAc...) asparagine glycosylation sites follow: N483 and N492. A helical membrane pass occupies residues 514–536; the sequence is LILSGFLSILYSFAAIPGYMVFL. Residues 537–545 lie on the Cytoplasmic side of the membrane; sequence RCIKSEEKS. A helical transmembrane segment spans residues 546 to 571; the sequence is LGIGIHAFCIRVFAGIPAPIYFGALI. Residues 572–605 lie on the Extracellular side of the membrane; it reads DRTCLHWGTQKCGAPGACRMYDINSFRRIYLGMS. A helical membrane pass occupies residues 606-623; it reads AALRGSSYLPAFVIVILT. Residues 624 to 670 are Cytoplasmic-facing; that stretch reads RKFSLPGKINSSEMEIAEMKLTEKESQCTDVHRNPKFKNDGELKTKL.

This sequence belongs to the organo anion transporter (TC 2.A.60) family. All isoforms are detected in kidney, and many are kidney specific. Isoforms 2 and 13 are also detected in liver. Isoforms 4 and 9/K4 are ubiquitous, but isoform 9/K13 is kidney specific. Isoforms 5 and 14 are detected in all tissues tested, with the exception of pancreas and spleen. Isoforms 11 and 15 are detected in kidney, pancreas and testis. Isoform 7 is detected in kidney, liver, testis and spleen.

It is found in the cell membrane. Its function is as follows. Mediates the Na(+)-independent transport of organic anions such as methotrexate, taurocholate, folate and prostaglandin E2. May contribute to renal secretion and/or reabsorption of hydrophobic anionic compounds. Mediates renal clearance of methotrexate from the blood. This chain is Solute carrier organic anion transporter family member 1A3 (Slco1a3), found in Rattus norvegicus (Rat).